Consider the following 130-residue polypeptide: MAEKDKWGVAHVYSSFNNTIITVTDITGAETITQWSGGKVVRSDRQESSPFAAMEAANRVADDIKEKGIAGLHIKVRASGGNGPRTPGPGAQATIRALARAGIKIGKIEDVTPIPHDGTGRPGGKRGRRV.

The disordered stretch occupies residues 109–130 (EDVTPIPHDGTGRPGGKRGRRV).

Belongs to the universal ribosomal protein uS11 family. As to quaternary structure, part of the 30S ribosomal subunit.

Functionally, located on the platform of the 30S subunit. The chain is Small ribosomal subunit protein uS11 from Methanosphaera stadtmanae (strain ATCC 43021 / DSM 3091 / JCM 11832 / MCB-3).